A 59-amino-acid chain; its full sequence is Large ribosomal subunit protein bL32 (59 aa).

The protein belongs to the bacterial ribosomal protein bL32 family.

This is Large ribosomal subunit protein bL32 from Anaeromyxobacter dehalogenans (strain 2CP-C).